The chain runs to 454 residues: tRNA-2-methylthio-N(6)-dimethylallyladenosine synthase (454 aa).

Positions 6–122 (RHYHITTFGC…LKDLLESVFD (117 aa)) constitute an MTTase N-terminal domain. C15, C51, C85, C157, C161, and C164 together coordinate [4Fe-4S] cluster. The region spanning 143-381 (RDSKVTAWVN…HLGNLKVAER (239 aa)) is the Radical SAM core domain. A TRAM domain is found at 383 to 447 (QRYFGRIEEV…PFSLTGQPVE (65 aa)).

The protein belongs to the methylthiotransferase family. MiaB subfamily. In terms of assembly, monomer. [4Fe-4S] cluster serves as cofactor.

The protein resides in the cytoplasm. The enzyme catalyses N(6)-dimethylallyladenosine(37) in tRNA + (sulfur carrier)-SH + AH2 + 2 S-adenosyl-L-methionine = 2-methylsulfanyl-N(6)-dimethylallyladenosine(37) in tRNA + (sulfur carrier)-H + 5'-deoxyadenosine + L-methionine + A + S-adenosyl-L-homocysteine + 2 H(+). Catalyzes the methylthiolation of N6-(dimethylallyl)adenosine (i(6)A), leading to the formation of 2-methylthio-N6-(dimethylallyl)adenosine (ms(2)i(6)A) at position 37 in tRNAs that read codons beginning with uridine. This Nostoc punctiforme (strain ATCC 29133 / PCC 73102) protein is tRNA-2-methylthio-N(6)-dimethylallyladenosine synthase.